A 341-amino-acid polypeptide reads, in one-letter code: Ketol-acid reductoisomerase (NADP(+)) (341 aa).

Residues methionine 1–threonine 181 enclose the KARI N-terminal Rossmann domain. NADP(+) contacts are provided by residues phenylalanine 24 to glutamine 27, serine 50, serine 52, and aspartate 82 to glutamine 85. Residue histidine 107 is part of the active site. Glycine 133 is a binding site for NADP(+). Positions threonine 182–glycine 327 constitute a KARI C-terminal knotted domain. Residues aspartate 190, glutamate 194, glutamate 226, and glutamate 230 each contribute to the Mg(2+) site. Position 251 (serine 251) interacts with substrate.

The protein belongs to the ketol-acid reductoisomerase family. Mg(2+) serves as cofactor.

It catalyses the reaction (2R)-2,3-dihydroxy-3-methylbutanoate + NADP(+) = (2S)-2-acetolactate + NADPH + H(+). It carries out the reaction (2R,3R)-2,3-dihydroxy-3-methylpentanoate + NADP(+) = (S)-2-ethyl-2-hydroxy-3-oxobutanoate + NADPH + H(+). It functions in the pathway amino-acid biosynthesis; L-isoleucine biosynthesis; L-isoleucine from 2-oxobutanoate: step 2/4. Its pathway is amino-acid biosynthesis; L-valine biosynthesis; L-valine from pyruvate: step 2/4. Involved in the biosynthesis of branched-chain amino acids (BCAA). Catalyzes an alkyl-migration followed by a ketol-acid reduction of (S)-2-acetolactate (S2AL) to yield (R)-2,3-dihydroxy-isovalerate. In the isomerase reaction, S2AL is rearranged via a Mg-dependent methyl migration to produce 3-hydroxy-3-methyl-2-ketobutyrate (HMKB). In the reductase reaction, this 2-ketoacid undergoes a metal-dependent reduction by NADPH to yield (R)-2,3-dihydroxy-isovalerate. This is Ketol-acid reductoisomerase (NADP(+)) from Rubrobacter xylanophilus (strain DSM 9941 / JCM 11954 / NBRC 16129 / PRD-1).